The sequence spans 357 residues: 39 kDa FK506-binding nuclear protein (357 aa).

Ser92 carries the post-translational modification Phosphoserine. The tract at residues 113–251 is disordered; that stretch reads KNSKKSEDDE…ASKDPRTITG (139 aa). Acidic residues predominate over residues 120–182; that stretch reads DDEDENESGE…QDSDDSEAEE (63 aa). Residues Ser193 and Ser197 each carry the phosphoserine modification. Basic and acidic residues predominate over residues 222–237; the sequence is EKPEAKKEQPKAKEPA. Residues 269–357 enclose the PPIase FKBP-type domain; the sequence is GKRVSVYYIG…VFEVELKAVH (89 aa).

The protein belongs to the FKBP-type PPIase family. As to expression, ubiquitously expressed, highest levels in ovary.

The protein localises to the nucleus. The catalysed reaction is [protein]-peptidylproline (omega=180) = [protein]-peptidylproline (omega=0). PPIases accelerate the folding of proteins. May function in a signal transduction cascade during early development. This Drosophila melanogaster (Fruit fly) protein is 39 kDa FK506-binding nuclear protein.